Reading from the N-terminus, the 309-residue chain is tRNA dimethylallyltransferase (309 aa).

Residue 8 to 15 (GPTATGKS) coordinates ATP. 10-15 (TATGKS) contributes to the substrate binding site. The tract at residues 33-36 (DSRQ) is interaction with substrate tRNA.

This sequence belongs to the IPP transferase family. In terms of assembly, monomer. Mg(2+) is required as a cofactor.

It carries out the reaction adenosine(37) in tRNA + dimethylallyl diphosphate = N(6)-dimethylallyladenosine(37) in tRNA + diphosphate. In terms of biological role, catalyzes the transfer of a dimethylallyl group onto the adenine at position 37 in tRNAs that read codons beginning with uridine, leading to the formation of N6-(dimethylallyl)adenosine (i(6)A). In Trichodesmium erythraeum (strain IMS101), this protein is tRNA dimethylallyltransferase.